We begin with the raw amino-acid sequence, 739 residues long: Probable beta-glucosidase L (739 aa).

The first 17 residues, 1–17, serve as a signal peptide directing secretion; the sequence is MQNLFLSLLAAAVTVHA. Asparagine 224 carries an N-linked (GlcNAc...) asparagine glycan. The active site involves aspartate 252. N-linked (GlcNAc...) asparagine glycosylation is present at asparagine 398.

It belongs to the glycosyl hydrolase 3 family.

The protein localises to the secreted. It carries out the reaction Hydrolysis of terminal, non-reducing beta-D-glucosyl residues with release of beta-D-glucose.. The protein operates within glycan metabolism; cellulose degradation. Beta-glucosidases are one of a number of cellulolytic enzymes involved in the degradation of cellulosic biomass. Catalyzes the last step releasing glucose from the inhibitory cellobiose. This Neosartorya fischeri (strain ATCC 1020 / DSM 3700 / CBS 544.65 / FGSC A1164 / JCM 1740 / NRRL 181 / WB 181) (Aspergillus fischerianus) protein is Probable beta-glucosidase L (bglL).